The following is a 45-amino-acid chain: Sperm-specific protein Phi-3 (45 aa).

Residues Ala-1–Lys-45 are disordered.

The protein localises to the nucleus. Its subcellular location is the chromosome. Functionally, involved in nuclear basic protein transition: histones are replaced by spermatid specific proteins which are themselves replaced by protamines in late spermatids. This Mytilus californianus (California mussel) protein is Sperm-specific protein Phi-3.